The following is a 606-amino-acid chain: Threonine--tRNA ligase (606 aa).

Residues 212–503 form a catalytic region; sequence DHRKLGVEMK…LLEHTAGELP (292 aa). Positions 304, 355, and 480 each coordinate Zn(2+).

This sequence belongs to the class-II aminoacyl-tRNA synthetase family. Homodimer. Requires Zn(2+) as cofactor.

It localises to the cytoplasm. It carries out the reaction tRNA(Thr) + L-threonine + ATP = L-threonyl-tRNA(Thr) + AMP + diphosphate + H(+). Its function is as follows. Catalyzes the attachment of threonine to tRNA(Thr) in a two-step reaction: L-threonine is first activated by ATP to form Thr-AMP and then transferred to the acceptor end of tRNA(Thr). Also edits incorrectly charged L-seryl-tRNA(Thr). In Campylobacter concisus (strain 13826), this protein is Threonine--tRNA ligase.